The primary structure comprises 45 residues: Large ribosomal subunit protein bL34 (45 aa).

It belongs to the bacterial ribosomal protein bL34 family.

The protein is Large ribosomal subunit protein bL34 (rpmH) of Streptomyces bikiniensis.